The primary structure comprises 513 residues: Histidine ammonia-lyase (513 aa).

A cross-link (5-imidazolinone (Ala-Gly)) is located at residues 145 to 147; sequence ASG. Ser-146 bears the 2,3-didehydroalanine (Ser) mark.

The protein belongs to the PAL/histidase family. In terms of processing, contains an active site 4-methylidene-imidazol-5-one (MIO), which is formed autocatalytically by cyclization and dehydration of residues Ala-Ser-Gly.

It localises to the cytoplasm. It catalyses the reaction L-histidine = trans-urocanate + NH4(+). It participates in amino-acid degradation; L-histidine degradation into L-glutamate; N-formimidoyl-L-glutamate from L-histidine: step 1/3. The chain is Histidine ammonia-lyase from Vibrio vulnificus (strain CMCP6).